The following is a 155-amino-acid chain: Endoribonuclease YbeY (155 aa).

Positions 110, 114, and 120 each coordinate Zn(2+).

The protein belongs to the endoribonuclease YbeY family. Zn(2+) is required as a cofactor.

It is found in the cytoplasm. Single strand-specific metallo-endoribonuclease involved in late-stage 70S ribosome quality control and in maturation of the 3' terminus of the 16S rRNA. The sequence is that of Endoribonuclease YbeY from Deinococcus radiodurans (strain ATCC 13939 / DSM 20539 / JCM 16871 / CCUG 27074 / LMG 4051 / NBRC 15346 / NCIMB 9279 / VKM B-1422 / R1).